A 316-amino-acid chain; its full sequence is Uracil-DNA glycosylase (316 aa).

A compositionally biased stretch (low complexity) spans 36-79 (AAAAAPAGAGAGASKPARPSAAARPAKGTPAASAATTATGADAS). Residues 36–91 (AAAAAPAGAGAGASKPARPSAAARPAKGTPAASAATTATGADASAPPPDPGAPTWD) are disordered. The Proton acceptor role is filled by D159.

It belongs to the uracil-DNA glycosylase (UDG) superfamily. UNG family.

It is found in the host nucleus. The catalysed reaction is Hydrolyzes single-stranded DNA or mismatched double-stranded DNA and polynucleotides, releasing free uracil.. Functionally, excises uracil residues from the DNA which can arise as a result of misincorporation of dUMP residues by DNA polymerase or deamination of cytosines. Therefore may reduce deleterious uracil incorporation into the viral genome, particularly in terminally differentiated cells which lack DNA repair enzymes. This Sus scrofa (Pig) protein is Uracil-DNA glycosylase (UL2).